Here is a 593-residue protein sequence, read N- to C-terminus: SPI-1 type 3 secretion system translocon protein SctE (593 aa).

2 coiled-coil regions span residues 151 to 208 (DTAK…ATDA) and 287 to 314 (EGRQAEMEKKSAEFQEETRKAEETNRIM). 2 consecutive transmembrane segments (helical) span residues 330–350 (VVAAVFTGGASLALAAVGLAV) and 409–429 (IVGAIVAAIAMVAVIVVVAVV).

The protein belongs to the SctE/SipB/YopB family. The core secretion machinery of the T3SS is composed of approximately 20 different proteins, including cytoplasmic components, a base, an export apparatus and a needle. This subunit is involved in the formation of a pore, called the translocon, in host membrane.

The protein resides in the secreted. It localises to the host membrane. It is found in the host cell. Its function is as follows. Component of the type III secretion system 1 (SPI-1 T3SS), also called injectisome, which is used to inject bacterial effector proteins into eukaryotic host cells. SipB/SctE1 and SipC/SctB are inserted into the host membrane where they form a pore and allow the translocation of effector proteins into the cytosol of target cells. Induces macrophage apoptosis either by binding and activating the proapoptotic enzyme caspase-1 (caspase-1 dependent), resulting in the release of interleukin-1 beta active form, or by disrupting mitochondria and inducing autophagy (caspase-1 independent). The former is dependent of its membrane-fusion activity. This is SPI-1 type 3 secretion system translocon protein SctE from Salmonella typhi.